The sequence spans 141 residues: Large ribosomal subunit protein uL11 (141 aa).

Belongs to the universal ribosomal protein uL11 family. As to quaternary structure, part of the ribosomal stalk of the 50S ribosomal subunit. Interacts with L10 and the large rRNA to form the base of the stalk. L10 forms an elongated spine to which L12 dimers bind in a sequential fashion forming a multimeric L10(L12)X complex. One or more lysine residues are methylated.

In terms of biological role, forms part of the ribosomal stalk which helps the ribosome interact with GTP-bound translation factors. This is Large ribosomal subunit protein uL11 from Chlamydia pneumoniae (Chlamydophila pneumoniae).